The sequence spans 310 residues: Antiviral protein II/III (310 aa).

Residues 1 to 25 (MKMKVLEVVGLAISIWLMLTPPASS) form the signal peptide. Disulfide bonds link Cys-57–Cys-284 and Cys-106–Cys-123. Tyr-94 is a catalytic residue. Catalysis depends on residues Tyr-142, Glu-197, and Arg-200.

Belongs to the ribosome-inactivating protein family. Type 1 RIP subfamily. In terms of tissue distribution, PAP-II is expressed in early summer leaves (at protein level). PAP-III is expressed in late summer leaves (at protein level).

The catalysed reaction is Endohydrolysis of the N-glycosidic bond at one specific adenosine on the 28S rRNA.. Its function is as follows. Possesses antiviral potency. Inhibits viral infection of plants (tobacco mosaic virus). Inhibits protein synthesis in both prokaryotes and eukaryotes. The protein is Antiviral protein II/III (PAP2) of Phytolacca americana (American pokeweed).